A 147-amino-acid polypeptide reads, in one-letter code: uncharacterized protein (147 aa).

Residues 1-137 (MRDNTIGSLI…LYELMTKVHK (137 aa)) enclose the HTH marR-type domain. The H-T-H motif DNA-binding region spans 53-76 (QMELAEKVTVTQGGISRMLTRLEK).

This is an uncharacterized protein from Bacillus cereus (strain ATCC 14579 / DSM 31 / CCUG 7414 / JCM 2152 / NBRC 15305 / NCIMB 9373 / NCTC 2599 / NRRL B-3711).